The following is a 172-amino-acid chain: MSVPGPSSPDGALTRPPYCLEAGEPTPGLSDTSPDEGLIEDLTIEDKAVEQLAEGLLSHYLPDLQRSKQALQELTQNQVVLLDTLEQEISKFKECHSMLDINALFAEAKHYHAKLVNIRKEMLMLHEKTSKLKKRALKLQQKRQKEELEREQQREKEFEREKQLTARPAKRM.

Disordered stretches follow at residues methionine 1 to glutamate 36 and arginine 135 to methionine 172. Residues aspartate 63–arginine 167 are a coiled coil. Positions arginine 143–leucine 164 are enriched in basic and acidic residues.

Belongs to the BLOC1S6 family. Interacts with BLOC1S4 and DTNBP1/BLOC1S7. Homodimer. Component of the biogenesis of lysosome-related organelles complex 1 (BLOC-1) composed of BLOC1S1, BLOC1S2, BLOC1S3, BLOC1S4, BLOC1S5, BLOC1S6, DTNBP1/BLOC1S7 and SNAPIN/BLOC1S8. Octamer composed of one copy each BLOC1S1, BLOC1S2, BLOC1S3, BLOC1S4, BLOC1S5, BLOC1S6, DTNBP1/BLOC1S7 and SNAPIN/BLOC1S8. The BLOC-1 complex associates with the AP-3 protein complex and membrane protein cargos. Interacts with BLOC1S5, F-actin, SNAP25 isoform 1 and isoform 2, SNAP47 and STX12. Phosphorylated. In terms of tissue distribution, widely expressed.

The protein resides in the cytoplasm. Its subcellular location is the membrane. Functionally, component of the BLOC-1 complex, a complex that is required for normal biogenesis of lysosome-related organelles (LRO), such as platelet dense granules and melanosomes. In concert with the AP-3 complex, the BLOC-1 complex is required to target membrane protein cargos into vesicles assembled at cell bodies for delivery into neurites and nerve terminals. The BLOC-1 complex, in association with SNARE proteins, is also proposed to be involved in neurite extension. May play a role in intracellular vesicle trafficking, particularly in the vesicle-docking and fusion process. This chain is Biogenesis of lysosome-related organelles complex 1 subunit 6 (BLOC1S6), found in Homo sapiens (Human).